Here is a 163-residue protein sequence, read N- to C-terminus: Calcium-binding protein 2 (163 aa).

The N-myristoyl glycine moiety is linked to residue G2. EF-hand domains are found at residues 21–56 (EEIE…LGYM), 72–89 (GKVD…KLLA), 95–130 (IGVR…LLGE), and 132–163 (LSQR…MMSR). The Ca(2+) site is built by D34, D36, D38, Y40, and E45. Residues D108, N110, D112, C114, E119, D145, N147, D149, and E156 each contribute to the Ca(2+) site.

It localises to the cytoplasm. The protein resides in the perinuclear region. It is found in the cell membrane. The protein localises to the golgi apparatus. Its function is as follows. Required for sound encoding at inner hair cells (IHCs) synapses, likely via inhibition of the inactivation of voltage-gated calcium channel of type 1.3 (Cav1.3) in the IHCs. Required for the normal transfer of light signals through the retina. The protein is Calcium-binding protein 2 (CABP2) of Bos taurus (Bovine).